A 185-amino-acid polypeptide reads, in one-letter code: Ribosome-recycling factor (185 aa).

The protein belongs to the RRF family.

It localises to the cytoplasm. Responsible for the release of ribosomes from messenger RNA at the termination of protein biosynthesis. May increase the efficiency of translation by recycling ribosomes from one round of translation to another. This is Ribosome-recycling factor from Corynebacterium efficiens (strain DSM 44549 / YS-314 / AJ 12310 / JCM 11189 / NBRC 100395).